A 2489-amino-acid chain; its full sequence is Protein YPR117W (2489 aa).

The next 2 helical transmembrane spans lie at 19–39 (FMLF…WILM) and 128–148 (VLSI…LALT). 15 N-linked (GlcNAc...) asparagine glycosylation sites follow: asparagine 191, asparagine 210, asparagine 311, asparagine 452, asparagine 468, asparagine 605, asparagine 638, asparagine 663, asparagine 698, asparagine 789, asparagine 835, asparagine 981, asparagine 1255, asparagine 1404, and asparagine 1476. Residues 1610-1676 (LTQEKLATER…RLHTVNTILS (67 aa)) are a coiled coil. The interval 1685–1704 (PGGNTDGDSSSSLSDTDVNL) is disordered. Positions 1690 to 1704 (DGDSSSSLSDTDVNL) are enriched in low complexity. 2 N-linked (GlcNAc...) asparagine glycosylation sites follow: asparagine 1978 and asparagine 2189. 2 positions are modified to phosphoserine: serine 2254 and serine 2278. The N-linked (GlcNAc...) asparagine glycan is linked to asparagine 2279. A compositionally biased stretch (polar residues) spans 2451–2471 (SSTHSSDIRSINSDETYNEND). Positions 2451-2489 (SSTHSSDIRSINSDETYNENDGNGVKPFYPVTSEFSKNK) are disordered.

The protein localises to the cell membrane. It localises to the endoplasmic reticulum membrane. It is found in the mitochondrion membrane. In terms of biological role, tube-forming lipid transport protein which may bind to phosphatidylinositols and may affect phosphatidylinositol-4,5-bisphosphate (PtdIns-4,5-P2) distribution. The sequence is that of Protein YPR117W from Saccharomyces cerevisiae (strain ATCC 204508 / S288c) (Baker's yeast).